We begin with the raw amino-acid sequence, 152 residues long: Em-like protein GEA1 (152 aa).

2 stretches are compositionally biased toward basic and acidic residues: residues 1 to 17 and 32 to 63; these read MASK…KAKQ and EAQE…IGHK. Residues 1 to 63 are disordered; it reads MASKQLSREE…HEGYQEIGHK (63 aa). 4 repeat units span residues 44–63, 64–83, 84–103, and 104–123. A 4 X 20 AA tandem repeats region spans residues 44–123; the sequence is GGQTRKEQLG…HEGYKEMGRK (80 aa). A disordered region spans residues 116 to 152; that stretch reads GYKEMGRKGGLSTMEKSGGERAEEEGIEIDESKFTNK.

It belongs to the small hydrophilic plant seed protein family. In terms of tissue distribution, in seeds only. Specifically located to vascular bundles in the cotyledon and axis of the dry seed. Also found in the epiderm and outer layers of the cortex in the embryo axis.

Functionally, it is thought to provide protection for the cytoplasm during the desiccation stage of embryo development. In Arabidopsis thaliana (Mouse-ear cress), this protein is Em-like protein GEA1 (EM1).